A 322-amino-acid chain; its full sequence is Protein mono-ADP-ribosyltransferase PARP16 (322 aa).

Residues 1–287 (MQPSGWAAAR…RASSQLSWFS (287 aa)) are Cytoplasmic-facing. In terms of domain architecture, PARP alpha-helical spans 5–91 (GWAAAREAAG…AWDLVSWILS (87 aa)). Aspartate 37 carries the post-translational modification ADP-ribosyl aspartic acid. ADP-ribosyl glutamic acid is present on glutamate 70. One can recognise a PARP catalytic domain in the interval 94-279 (VLTIHSAGKA…VYSQKPPKRA (186 aa)). N6-(ADP-ribosyl)lysine is present on residues lysine 110 and lysine 137. Residues histidine 152, tyrosine 182, and tyrosine 254 each coordinate NAD(+). The helical transmembrane segment at 288-308 (SHWFTVMISLYLLLLLIVSVI) threads the bilayer. Residues 309-322 (NSSAFQHFWNRAKR) are Lumenal-facing.

The protein belongs to the ARTD/PARP family. As to quaternary structure, interacts with KPNB1. In terms of processing, auto-mono-ADP-ribosylated.

Its subcellular location is the endoplasmic reticulum membrane. It catalyses the reaction L-aspartyl-[protein] + NAD(+) = 4-O-(ADP-D-ribosyl)-L-aspartyl-[protein] + nicotinamide. The catalysed reaction is L-glutamyl-[protein] + NAD(+) = 5-O-(ADP-D-ribosyl)-L-glutamyl-[protein] + nicotinamide. It carries out the reaction L-lysyl-[protein] + NAD(+) = N(6)-(ADP-D-ribosyl)-L-lysyl-[protein] + nicotinamide + H(+). Its activity is regulated as follows. In absence of activation signal, PARP16 is autoinhibited by the PARP alpha-helical domain (also named HD region), which prevents effective NAD(+)-binding. Activity is highly stimulated by signals, which unfold the PARP alpha-helical domain, relieving autoinhibition. Intracellular mono-ADP-ribosyltransferase that plays a role in different processes, such as protein translation and unfolded protein response (UPR), through the mono-ADP-ribosylation of proteins involved in those processes. Acts as an inhibitor of protein translation by catalyzing mono-ADP-ribosylation of ribosomal subunits, such as RPL14 and RPS6, thereby inhibiting polysome assembly and mRNA loading. Mono-ADP-ribosylation of ribosomal subunits is promoted by NMNAT2. Involved in the unfolded protein response (UPR) by ADP-ribosylating and activating EIF2AK3 and ERN1, two important UPR effectors. May also mediate mono-ADP-ribosylation of karyopherin KPNB1 a nuclear import factor. May not modify proteins on arginine or cysteine residues compared to other mono-ADP-ribosyltransferases. This is Protein mono-ADP-ribosyltransferase PARP16 from Homo sapiens (Human).